A 125-amino-acid chain; its full sequence is Oxytocin-neurophysin 1 (125 aa).

A signal peptide spans 1 to 19; the sequence is MAGSSLACCLLGLLALTSA. An intrachain disulfide couples C20 to C25. At G28 the chain carries Glycine amide. 7 cysteine pairs are disulfide-bonded: C41–C85, C44–C58, C52–C75, C59–C65, C92–C104, C98–C116, and C105–C110.

It belongs to the vasopressin/oxytocin family. As to quaternary structure, interacts with oxytocin receptor (Ki=1.5 nM). Interacts with vasopressin V1aR/AVPR1A (Ki=37 nM), V1bR/AVPR1B (Ki=222 nM), and V2R/AVPR2 receptors (Ki=823 nM).

It localises to the secreted. In terms of biological role, neurophysin 1 specifically binds oxytocin. Its function is as follows. Oxytocin causes contraction of the smooth muscle of the uterus and of the mammary gland. Acts by binding to oxytocin receptor (OXTR). In Bos taurus (Bovine), this protein is Oxytocin-neurophysin 1 (OXT).